We begin with the raw amino-acid sequence, 389 residues long: Chalcone synthase 1 (389 aa).

Residue Cys-164 is part of the active site.

It belongs to the thiolase-like superfamily. Chalcone/stilbene synthases family.

The catalysed reaction is (E)-4-coumaroyl-CoA + 3 malonyl-CoA + 3 H(+) = 2',4,4',6'-tetrahydroxychalcone + 3 CO2 + 4 CoA. It functions in the pathway secondary metabolite biosynthesis; flavonoid biosynthesis. Its function is as follows. The primary product of this enzyme is 4,2',4',6'-tetrahydroxychalcone (also termed naringenin-chalcone or chalcone) which can under specific conditions spontaneously isomerize into naringenin. This chain is Chalcone synthase 1 (CHS1), found in Medicago sativa (Alfalfa).